The following is a 152-amino-acid chain: Protein D1 (152 aa).

Belongs to the phosphatidylethanolamine-binding protein family.

The chain is Protein D1 (D1) from Onchocerca volvulus.